We begin with the raw amino-acid sequence, 128 residues long: MSWAGPEEIYLSTSLASYLDRKLLVLLRDGRKLMGTLRSFDQFANAVLEGACERVIVGEQYCDIPLGLYVIRGENVVLIGELDTEREELPPHMIRVSEAEIKRAQKVEREASELRGTMRKRMEFLDFD.

A Sm domain is found at 10–85 (YLSTSLASYL…VVLIGELDTE (76 aa)).

It belongs to the snRNP Sm proteins family. In terms of assembly, component of the heptameric LSM1-LSM7 complex that forms a seven-membered ring structure with a donut shape. The LSM subunits are arranged in the order LSM1, LSM2, LSM3, LSM6, LSM5, LSM7 and LSM4. LSM1B subunit interacts only with its two neighboring subunits, LSM2 and LSM4. In terms of tissue distribution, expressed in roots, leaves, stems, flowers and siliques.

The protein resides in the cytoplasm. Its subcellular location is the P-body. In terms of biological role, component of the cytoplasmic LSM1-LSM7 complex which is involved in mRNA degradation by promoting decapping and leading to accurate 5'-3' mRNA decay. LSM1A and LSM1B are essential for the formation of the cytoplasmic LSM1-LSM7 complex which regulates developmental gene expression by the decapping of specific development-related transcripts. Required for P-body formation during heat stress. This Arabidopsis thaliana (Mouse-ear cress) protein is Sm-like protein LSM1B.